Reading from the N-terminus, the 466-residue chain is UDP-glycosyltransferase 91B1 (466 aa).

UDP-alpha-D-glucose-binding positions include threonine 286, valine 342–glutamine 344, histidine 359–glutamate 367, and asparagine 381–glutamine 384.

The protein belongs to the UDP-glycosyltransferase family.

This is UDP-glycosyltransferase 91B1 (UGT91B1) from Arabidopsis thaliana (Mouse-ear cress).